The chain runs to 273 residues: Large ribosomal subunit protein uL2 (273 aa).

Disordered regions lie at residues 34–54 and 223–273; these read LEKKSKSGGRNNNGRITTRHI and VAMN…RRRK.

This sequence belongs to the universal ribosomal protein uL2 family. As to quaternary structure, part of the 50S ribosomal subunit. Forms a bridge to the 30S subunit in the 70S ribosome.

One of the primary rRNA binding proteins. Required for association of the 30S and 50S subunits to form the 70S ribosome, for tRNA binding and peptide bond formation. It has been suggested to have peptidyltransferase activity; this is somewhat controversial. Makes several contacts with the 16S rRNA in the 70S ribosome. The sequence is that of Large ribosomal subunit protein uL2 from Azotobacter vinelandii (strain DJ / ATCC BAA-1303).